The primary structure comprises 510 residues: NAD(P)H-quinone oxidoreductase subunit 2 A, chloroplastic (510 aa).

12 consecutive transmembrane segments (helical) span residues 31 to 51 (FIFP…IDLT), 59 to 79 (WFYF…LFRW), 99 to 119 (IFQF…VEYI), 124 to 144 (MAIT…MFLC), 149 to 169 (LITI…LSGY), 183 to 203 (YLLM…WLYG), 229 to 249 (ISIA…PAPF), 295 to 315 (WHLL…LLAI), 323 to 343 (MLAY…IVGD), 354 to 374 (YMLF…LFGL), 395 to 415 (ALSL…AGFF), and 418 to 438 (LYLF…IGLL).

This sequence belongs to the complex I subunit 2 family. As to quaternary structure, NDH is composed of at least 16 different subunits, 5 of which are encoded in the nucleus.

Its subcellular location is the plastid. It is found in the chloroplast thylakoid membrane. It carries out the reaction a plastoquinone + NADH + (n+1) H(+)(in) = a plastoquinol + NAD(+) + n H(+)(out). The catalysed reaction is a plastoquinone + NADPH + (n+1) H(+)(in) = a plastoquinol + NADP(+) + n H(+)(out). Functionally, NDH shuttles electrons from NAD(P)H:plastoquinone, via FMN and iron-sulfur (Fe-S) centers, to quinones in the photosynthetic chain and possibly in a chloroplast respiratory chain. The immediate electron acceptor for the enzyme in this species is believed to be plastoquinone. Couples the redox reaction to proton translocation, and thus conserves the redox energy in a proton gradient. This is NAD(P)H-quinone oxidoreductase subunit 2 A, chloroplastic from Saccharum officinarum (Sugarcane).